We begin with the raw amino-acid sequence, 795 residues long: uncharacterized protein (795 aa).

The stretch at 228-280 (NIICFKNKCKNNEKEKKEEEEDHDHDHDDKKKEKEDKEKEEEEEEEDSNDDFE) forms a coiled coil. Disordered regions lie at residues 242 to 278 (EKKE…SNDD), 326 to 430 (TTTT…TPNR), 455 to 484 (INQQ…KSEP), and 673 to 743 (NNNN…NENE). Positions 251-264 (DHDHDDKKKEKEDK) are enriched in basic and acidic residues. A compositionally biased stretch (acidic residues) spans 265–278 (EKEEEEEEEDSNDD). Over residues 326–345 (TTTTTVNGSKNSSNTTTPIT) the composition is skewed to low complexity. The span at 362 to 373 (DDDDDDDLTDED) shows a compositional bias: acidic residues. A compositionally biased stretch (polar residues) spans 377–398 (HNEIYSTSPKVSHSTFCQSSPT). Composition is skewed to low complexity over residues 399 to 414 (LLDL…QQQQ), 455 to 480 (INQQ…SSNI), and 673 to 729 (NNNN…NQNE). Residues 732 to 743 (NENKNENENENE) are compositionally biased toward basic and acidic residues.

This is an uncharacterized protein from Dictyostelium discoideum (Social amoeba).